The primary structure comprises 255 residues: tRNA (guanine-N(1)-)-methyltransferase (255 aa).

S-adenosyl-L-methionine-binding positions include Gly113 and Val133–Leu138.

This sequence belongs to the RNA methyltransferase TrmD family. As to quaternary structure, homodimer.

Its subcellular location is the cytoplasm. It catalyses the reaction guanosine(37) in tRNA + S-adenosyl-L-methionine = N(1)-methylguanosine(37) in tRNA + S-adenosyl-L-homocysteine + H(+). Its function is as follows. Specifically methylates guanosine-37 in various tRNAs. This chain is tRNA (guanine-N(1)-)-methyltransferase, found in Francisella philomiragia subsp. philomiragia (strain ATCC 25017 / CCUG 19701 / FSC 153 / O#319-036).